A 125-amino-acid chain; its full sequence is CLAVATA3/ESR (CLE)-related protein ESR3 (125 aa).

Residues 1 to 26 form the signal peptide; it reads MASRMGMVAIMSLFVYAIVVPTSVNA. Positions 45 to 125 are disordered; it reads QQQGGFIGHR…IGPPPLPDRY (81 aa). P75 and P78 each carry hydroxyproline. Residue P78 is glycosylated (O-linked (Ara...) hydroxyproline).

This sequence belongs to the CLV3/ESR signal peptide family. Post-translationally, the O-glycosylation (arabinosylation) of the hydroxyproline Pro-78 enhances binding affinity of the ESR3p peptide for its receptor. In terms of tissue distribution, seed endosperm.

The protein resides in the secreted. It is found in the extracellular space. Its function is as follows. Extracellular signal peptide that regulates cell fate. This chain is CLAVATA3/ESR (CLE)-related protein ESR3, found in Zea mays (Maize).